A 101-amino-acid polypeptide reads, in one-letter code: Small ribosomal subunit protein uS10 (101 aa).

It belongs to the universal ribosomal protein uS10 family. Part of the 30S ribosomal subunit.

Functionally, involved in the binding of tRNA to the ribosomes. This chain is Small ribosomal subunit protein uS10, found in Corynebacterium urealyticum (strain ATCC 43042 / DSM 7109).